A 174-amino-acid polypeptide reads, in one-letter code: Adenine phosphoribosyltransferase (174 aa).

The protein belongs to the purine/pyrimidine phosphoribosyltransferase family. In terms of assembly, homodimer.

The protein resides in the cytoplasm. The catalysed reaction is AMP + diphosphate = 5-phospho-alpha-D-ribose 1-diphosphate + adenine. It functions in the pathway purine metabolism; AMP biosynthesis via salvage pathway; AMP from adenine: step 1/1. In terms of biological role, catalyzes a salvage reaction resulting in the formation of AMP, that is energically less costly than de novo synthesis. This Nitrosomonas eutropha (strain DSM 101675 / C91 / Nm57) protein is Adenine phosphoribosyltransferase.